We begin with the raw amino-acid sequence, 367 residues long: DNA-directed RNA polymerase II subunit GRINL1A (367 aa).

The stretch at 15-40 (DLERRSLAELREMLKRQERLLRNEKF) forms a coiled coil. Residues 29 to 68 (KRQERLLRNEKFICKLPDKGKKIFDSFAKLKAAIAECEEV) are important for transcription repressor activity. Polar residues-rich tracts occupy residues 117–131 (SVDN…QNQG), 176–185 (RVSSQAEDTS), and 205–225 (GEQQ…SGTQ). 3 disordered regions span residues 117–185 (SVDN…EDTS), 203–225 (DQGE…SGTQ), and 254–281 (PFRQ…RRDK). Residues 226 to 297 (KKPHYMEVLE…TAARLLPLHH (72 aa)) form an interaction with Pol II region. A Phosphoserine modification is found at Ser-269. The interval 298–313 (MPTQLLSIEESLALQK) is important for transcription repressor activity. A coiled-coil region spans residues 300–329 (TQLLSIEESLALQKQRKQKYEEMQAKLAAQ). Positions 314–339 (QRKQKYEEMQAKLAAQKLAERLNIKM) are interaction with Pol II. The interval 335–367 (LNIKMRSYNPEGESSGRYREVRDEDDDWSSDEF) is disordered. The segment covering 357-367 (DEDDDWSSDEF) has biased composition (acidic residues).

This sequence belongs to the GRINL1 family. In terms of assembly, component of the Pol II(G) complex, which contains the RNA polymerase II (Pol II) core complex subunits and POLR2M isoform 1. Pol II(G) appears to be an abundant form of Pol II. In terms of processing, dephosphorylated at Ser-269 by the PNUTS-PP1 complex, promoting RNA polymerase II transcription pause-release.

The protein resides in the nucleus. Functionally, appears to be a stable component of the Pol II(G) complex form of RNA polymerase II (Pol II). Pol II synthesizes mRNA precursors and many functional non-coding RNAs and is the central component of the basal RNA polymerase II transcription machinery. May play a role in the Mediator complex-dependent regulation of transcription activation. Acts as a negative regulator of transcriptional activation; this repression is relieved by the Mediator complex, which restores Pol II(G) activator-dependent transcription to a level equivalent to that of Pol II. This chain is DNA-directed RNA polymerase II subunit GRINL1A (POLR2M), found in Pongo abelii (Sumatran orangutan).